The chain runs to 386 residues: MHLLVRALVEEMAGRGVPHRVLTMSPPKVPKDIRIGQRIKVHARRLPVLPIPSDLEGYFGLVGAWAKGSLLWVLRNRKRLRREIGARVHAHCDGSGAAAFYPYLMSRILGVPLVVQIHSSRYLSQHPTTLFERVTDPIAKWAERHAVRKAAAVLMLTDRARDEMRRKAQLPAERVHRLAYLASDQFKDADTEARRAELRERYGLDDRPIVLYVGRIAAEKGVEYYIEAAAELTRRGRDCQFVIAGDGPARPDLEKLIGARGLRDRVTITGFMSHEFIPSMISLGELVVLPSRYEELGIVILECMTMRRPLVAHDVNGVNKLIEDGTTGIVVPPFRTPEMADAVERLLDDPELRERMAENAAPLPAAKYSLSAAGDQLAGIYREIGL.

It belongs to the glycosyltransferase group 1 family.

It carries out the reaction 2'-deamino-2'-hydroxyneamine + UDP-alpha-D-kanosamine = kanamycin A + UDP + H(+). It catalyses the reaction neamine + UDP-alpha-D-kanosamine = kanamycin B + UDP + H(+). The enzyme catalyses paromamine + UDP-alpha-D-kanosamine = kanamycin C + UDP + H(+). The catalysed reaction is 2'-deamino-2'-hydroxyparomamine + UDP-alpha-D-kanosamine = kanamycin X + UDP + H(+). It participates in antibiotic biosynthesis; kanamycin biosynthesis. In terms of biological role, glycosyltransferase involved in the biosynthesis of kanamycins by catalyzing the transfer of the hexose kanosamine from UDP-alpha-D-kanosamine to disaccharide precursors. Can also use UDP-alpha-D-glucose as sugar donor with much lower efficiency. The sequence is that of Alpha-D-kanosaminyltransferase (kanE) from Streptomyces kanamyceticus.